A 494-amino-acid chain; its full sequence is Probable cytochrome P450 313a4 (494 aa).

A heme-binding site is contributed by Cys-440.

The protein belongs to the cytochrome P450 family. Heme serves as cofactor.

It is found in the endoplasmic reticulum membrane. Its subcellular location is the microsome membrane. Functionally, may be involved in the metabolism of insect hormones and in the breakdown of synthetic insecticides. This is Probable cytochrome P450 313a4 (Cyp313a4) from Drosophila melanogaster (Fruit fly).